The chain runs to 416 residues: Formyl-CoA:oxalate CoA-transferase (416 aa).

CoA is bound by residues 17–18, R38, 72–75, 96–98, H104, and 137–140; these read QS, LNTK, NFH, and KAYE. D169 acts as the Nucleophile in catalysis. A substrate-binding site is contributed by 248-250; sequence GGQ. 273–275 contributes to the CoA binding site; sequence QEQ.

This sequence belongs to the CoA-transferase III family. Frc subfamily. As to quaternary structure, homodimer.

It catalyses the reaction formyl-CoA + oxalate = oxalyl-CoA + formate. The protein operates within metabolic intermediate degradation; oxalate degradation; CO(2) and formate from oxalate: step 1/2. Its function is as follows. Involved in the catabolism of oxalate and in the adapatation to low pH via the induction of the oxalate-dependent acid tolerance response (ATR). Catalyzes the transfer of the CoA moiety from formyl-CoA to oxalate. In Shigella sonnei (strain Ss046), this protein is Formyl-CoA:oxalate CoA-transferase.